Here is a 379-residue protein sequence, read N- to C-terminus: UDP-N-acetylglucosamine--N-acetylmuramyl-(pentapeptide) pyrophosphoryl-undecaprenol N-acetylglucosamine transferase (379 aa).

UDP-N-acetyl-alpha-D-glucosamine-binding positions include 17-19, N128, R169, S197, and Q298; that span reads TGG.

The protein belongs to the glycosyltransferase 28 family. MurG subfamily.

It localises to the cell inner membrane. The catalysed reaction is di-trans,octa-cis-undecaprenyl diphospho-N-acetyl-alpha-D-muramoyl-L-alanyl-D-glutamyl-meso-2,6-diaminopimeloyl-D-alanyl-D-alanine + UDP-N-acetyl-alpha-D-glucosamine = di-trans,octa-cis-undecaprenyl diphospho-[N-acetyl-alpha-D-glucosaminyl-(1-&gt;4)]-N-acetyl-alpha-D-muramoyl-L-alanyl-D-glutamyl-meso-2,6-diaminopimeloyl-D-alanyl-D-alanine + UDP + H(+). Its pathway is cell wall biogenesis; peptidoglycan biosynthesis. Cell wall formation. Catalyzes the transfer of a GlcNAc subunit on undecaprenyl-pyrophosphoryl-MurNAc-pentapeptide (lipid intermediate I) to form undecaprenyl-pyrophosphoryl-MurNAc-(pentapeptide)GlcNAc (lipid intermediate II). In Brucella canis (strain ATCC 23365 / NCTC 10854 / RM-666), this protein is UDP-N-acetylglucosamine--N-acetylmuramyl-(pentapeptide) pyrophosphoryl-undecaprenol N-acetylglucosamine transferase.